Consider the following 137-residue polypeptide: NADH dehydrogenase [ubiquinone] 1 beta subcomplex subunit 7 (137 aa).

Residue glycine 2 is the site of N-myristoyl glycine attachment. One can recognise a CHCH domain in the interval 56-98 (RDYCAHHLIRLLKCKRDSFPNFLACKQERHDWDYCEHRDYVMR). A Cx9C motif 1 motif is present at residues 59-69 (CAHHLIRLLKC). Intrachain disulfides connect cysteine 59/cysteine 90 and cysteine 69/cysteine 80. The residue at position 73 (serine 73) is a Phosphoserine. A Cx9C motif 2 motif is present at residues 80 to 90 (CKQERHDWDYC). A disordered region spans residues 113-137 (KRREKKAAELAKGQGPGEVDPKVAL).

This sequence belongs to the complex I NDUFB7 subunit family. In terms of assembly, complex I is composed of 45 different subunits.

It localises to the mitochondrion inner membrane. The protein resides in the mitochondrion intermembrane space. Its function is as follows. Accessory subunit of the mitochondrial membrane respiratory chain NADH dehydrogenase (Complex I), that is believed not to be involved in catalysis. Complex I functions in the transfer of electrons from NADH to the respiratory chain. The immediate electron acceptor for the enzyme is believed to be ubiquinone. In Homo sapiens (Human), this protein is NADH dehydrogenase [ubiquinone] 1 beta subcomplex subunit 7 (NDUFB7).